The chain runs to 322 residues: N-acetyl-gamma-glutamyl-phosphate reductase (322 aa).

Cysteine 117 is an active-site residue.

It belongs to the NAGSA dehydrogenase family. Type 2 subfamily.

Its subcellular location is the cytoplasm. The catalysed reaction is N-acetyl-L-glutamate 5-semialdehyde + phosphate + NADP(+) = N-acetyl-L-glutamyl 5-phosphate + NADPH + H(+). It participates in amino-acid biosynthesis; L-arginine biosynthesis; N(2)-acetyl-L-ornithine from L-glutamate: step 3/4. Functionally, catalyzes the NADPH-dependent reduction of N-acetyl-5-glutamyl phosphate to yield N-acetyl-L-glutamate 5-semialdehyde. The polypeptide is N-acetyl-gamma-glutamyl-phosphate reductase (Trichormus variabilis (strain ATCC 29413 / PCC 7937) (Anabaena variabilis)).